A 1501-amino-acid chain; its full sequence is RE1-silencing transcription factor A (1501 aa).

A C2H2-type 1 zinc finger spans residues 158–180 (FRCKPCQYKAESEEEFVHHIKIH). The segment covering 186 to 200 (VDNDSKKNPQGKEAD) has biased composition (basic and acidic residues). Residues 186-209 (VDNDSKKNPQGKEADSSIPEESDI) are disordered. 7 C2H2-type zinc fingers span residues 214–236 (IQCD…LKHH), 246–268 (YKCT…LRNH), 274–296 (YTCS…IRTH), 302–324 (YQCI…MRTH), 330–353 (FKCE…RQVH), 359–381 (LTCP…VELH), and 387–410 (FLCP…KSRH). Disordered stretches follow at residues 491 to 514 (SSTQ…SRKS), 569 to 612 (SFVK…SVAS), 885 to 929 (PTKV…VPGD), and 1040 to 1079 (VAAG…GDEQ). Basic and acidic residues-rich tracts occupy residues 498 to 512 (KASE…DKSR) and 594 to 605 (ITEKKEKGKQLD). Polar residues predominate over residues 1067-1079 (QPTSVQPPGGDEQ). The C2H2-type 9 zinc finger occupies 1463-1485 (FVCIFCDRTFRKEEEYTKHLRRH).

The protein resides in the nucleus. It localises to the cytoplasm. Transcriptional repressor which binds neuron-restrictive silencer element (NRSE) and represses neuronal gene transcription in non-neuronal cells. Plays a role in the early development of the nervous system and is required for proper patterning of the neuroectoderm during gastrulation. This involves the correct speciation of the neuroepithelial domain and adequate development of the non-neural ectoderm. This chain is RE1-silencing transcription factor A (rest-a), found in Xenopus laevis (African clawed frog).